We begin with the raw amino-acid sequence, 89 residues long: Small ribosomal subunit protein bS20 (89 aa).

Residues 1-29 (MTLANIKSAKKRAVQSEKRRQHNASQRSM) are disordered.

Belongs to the bacterial ribosomal protein bS20 family.

Binds directly to 16S ribosomal RNA. This is Small ribosomal subunit protein bS20 from Haemophilus influenzae (strain 86-028NP).